A 100-amino-acid polypeptide reads, in one-letter code: Aspartyl/glutamyl-tRNA(Asn/Gln) amidotransferase subunit C (100 aa).

Belongs to the GatC family. Heterotrimer of A, B and C subunits.

It catalyses the reaction L-glutamyl-tRNA(Gln) + L-glutamine + ATP + H2O = L-glutaminyl-tRNA(Gln) + L-glutamate + ADP + phosphate + H(+). The enzyme catalyses L-aspartyl-tRNA(Asn) + L-glutamine + ATP + H2O = L-asparaginyl-tRNA(Asn) + L-glutamate + ADP + phosphate + 2 H(+). Functionally, allows the formation of correctly charged Asn-tRNA(Asn) or Gln-tRNA(Gln) through the transamidation of misacylated Asp-tRNA(Asn) or Glu-tRNA(Gln) in organisms which lack either or both of asparaginyl-tRNA or glutaminyl-tRNA synthetases. The reaction takes place in the presence of glutamine and ATP through an activated phospho-Asp-tRNA(Asn) or phospho-Glu-tRNA(Gln). The sequence is that of Aspartyl/glutamyl-tRNA(Asn/Gln) amidotransferase subunit C from Streptococcus pneumoniae (strain JJA).